The chain runs to 423 residues: Glutamate-1-semialdehyde 2,1-aminomutase (423 aa).

Lysine 266 is modified (N6-(pyridoxal phosphate)lysine).

This sequence belongs to the class-III pyridoxal-phosphate-dependent aminotransferase family. HemL subfamily. As to quaternary structure, homodimer. It depends on pyridoxal 5'-phosphate as a cofactor.

It localises to the cytoplasm. It carries out the reaction (S)-4-amino-5-oxopentanoate = 5-aminolevulinate. It functions in the pathway porphyrin-containing compound metabolism; protoporphyrin-IX biosynthesis; 5-aminolevulinate from L-glutamyl-tRNA(Glu): step 2/2. The chain is Glutamate-1-semialdehyde 2,1-aminomutase from Nitratidesulfovibrio vulgaris (strain DP4) (Desulfovibrio vulgaris).